Consider the following 155-residue polypeptide: Small ribosomal subunit protein bS6 (155 aa).

Positions 94-155 (EKHEEGPSAM…RPRRPREDRV (62 aa)) are disordered.

Belongs to the bacterial ribosomal protein bS6 family.

In terms of biological role, binds together with bS18 to 16S ribosomal RNA. The chain is Small ribosomal subunit protein bS6 from Rhizobium leguminosarum bv. trifolii (strain WSM2304).